A 499-amino-acid chain; its full sequence is Eukaryotic peptide chain release factor GTP-binding subunit ERF3A (499 aa).

The segment at 1–69 is disordered; sequence MELSEPIVEN…PKSVVAPPGA (69 aa). Positions 41 to 50 are enriched in basic and acidic residues; it reads RPPEESAHEM. The tr-type G domain maps to 72 to 298; it reads KEHVNVVFIG…DNLPNFNRSV (227 aa). Residues 81–88 are G1; that stretch reads GHVDAGKS. A GTP-binding site is contributed by 84 to 89; the sequence is DAGKST. A G2 region spans residues 137-141; that stretch reads GKTVE. A G3 region spans residues 158-161; sequence DAPG. GTP is bound by residues 220–223 and 262–264; these read NKMD and SGL. Residues 220–223 are G4; that stretch reads NKMD. Residues 262 to 264 form a G5 region; sequence SGL.

This sequence belongs to the TRAFAC class translation factor GTPase superfamily. Classic translation factor GTPase family. ERF3 subfamily. Component of the eRF1-eRF3-GTP ternary complex, composed of ETF1/ERF1 and ERF3 (GSPT1/ERF3A or GSPT2/ERF3B) and GTP. Component of the transient SURF (SMG1-UPF1-eRF1-eRF3) complex. The ETF1-GSPT1 complex interacts with JMJD4. Interacts with PABPC1. Interacts with SHFL.

The catalysed reaction is GTP + H2O = GDP + phosphate + H(+). Its function is as follows. GTPase component of the eRF1-eRF3-GTP ternary complex, a ternary complex that mediates translation termination in response to the termination codons UAA, UAG and UGA. GSPT1/ERF3A mediates ETF1/ERF1 delivery to stop codons: The eRF1-eRF3-GTP complex binds to a stop codon in the ribosomal A-site. GTP hydrolysis by GSPT1/ERF3A induces a conformational change that leads to its dissociation, permitting ETF1/ERF1 to accommodate fully in the A-site. Component of the transient SURF complex which recruits UPF1 to stalled ribosomes in the context of nonsense-mediated decay (NMD) of mRNAs containing premature stop codons. Required for SHFL-mediated translation termination which inhibits programmed ribosomal frameshifting (-1PRF) of mRNA from viruses and cellular genes. This Homo sapiens (Human) protein is Eukaryotic peptide chain release factor GTP-binding subunit ERF3A (GSPT1).